A 476-amino-acid chain; its full sequence is Aspartyl/glutamyl-tRNA(Asn/Gln) amidotransferase subunit B (476 aa).

Belongs to the GatB/GatE family. GatB subfamily. Heterotrimer of A, B and C subunits.

The enzyme catalyses L-glutamyl-tRNA(Gln) + L-glutamine + ATP + H2O = L-glutaminyl-tRNA(Gln) + L-glutamate + ADP + phosphate + H(+). It catalyses the reaction L-aspartyl-tRNA(Asn) + L-glutamine + ATP + H2O = L-asparaginyl-tRNA(Asn) + L-glutamate + ADP + phosphate + 2 H(+). Functionally, allows the formation of correctly charged Asn-tRNA(Asn) or Gln-tRNA(Gln) through the transamidation of misacylated Asp-tRNA(Asn) or Glu-tRNA(Gln) in organisms which lack either or both of asparaginyl-tRNA or glutaminyl-tRNA synthetases. The reaction takes place in the presence of glutamine and ATP through an activated phospho-Asp-tRNA(Asn) or phospho-Glu-tRNA(Gln). This chain is Aspartyl/glutamyl-tRNA(Asn/Gln) amidotransferase subunit B, found in Moorella thermoacetica (strain ATCC 39073 / JCM 9320).